The sequence spans 206 residues: Ras-related protein Ral-B (206 aa).

A GTP-binding site is contributed by 21-29 (GSGGVGKSA). An Effector region motif is present at residues 43-51 (YEPTKADSY). GTP-binding positions include 68–72 (DTAGQ), 128–131 (NKSD), and 158–160 (SAK). Positions 181-206 (MSENKDKNGRKSSKSKKSFKERCCLL) are disordered. Cys203 is modified (cysteine methyl ester). Cys203 carries S-geranylgeranyl cysteine lipidation. Residues 204–206 (CLL) constitute a propeptide, removed in mature form.

The protein belongs to the small GTPase superfamily. Ras family. Interacts with EXOC2/Sec5 and EXOC8/Exo84. Interacts (via effector domain) with RALBP1. In terms of processing, prenylation is essential for membrane localization. Post-translationally, the farnesylated form confers resistance to the proapoptotic and anti-anchorage-dependent growth effects of some geranylgeranyltransferase I inhibitors.

Its subcellular location is the cell membrane. It localises to the midbody. The enzyme catalyses GTP + H2O = GDP + phosphate + H(+). Its activity is regulated as follows. Alternates between an inactive form bound to GDP and an active form bound to GTP. Activated by a guanine nucleotide-exchange factor (GEF) and inactivated by a GTPase-activating protein (GAP). Functionally, multifunctional GTPase involved in a variety of cellular processes including gene expression, cell migration, cell proliferation, oncogenic transformation and membrane trafficking. Accomplishes its multiple functions by interacting with distinct downstream effectors. Acts as a GTP sensor for GTP-dependent exocytosis of dense core vesicles. Required both to stabilize the assembly of the exocyst complex and to localize functional exocyst complexes to the leading edge of migrating cells. Required for suppression of apoptosis. In late stages of cytokinesis, upon completion of the bridge formation between dividing cells, mediates exocyst recruitment to the midbody to drive abscission. Involved in ligand-dependent receptor mediated endocytosis of the EGF and insulin receptors. In Mus musculus (Mouse), this protein is Ras-related protein Ral-B (Ralb).